A 676-amino-acid polypeptide reads, in one-letter code: Kojibiose hydrolase (676 aa).

The first 20 residues, 1-20, serve as a signal peptide directing secretion; sequence MNKGIIQLLALSLFCISVKA. E469 functions as the Proton donor in the catalytic mechanism. E613 serves as the catalytic Proton acceptor.

This sequence belongs to the glycosyl hydrolase 65 family.

The catalysed reaction is kojibiose + H2O = beta-D-glucose + D-glucose. Its function is as follows. Glycosidase that specifically hydrolyzes kojibiose to beta-glucose and glucose. Besides its activity on kojibiose, is also able to act on alpha-1,2-oligoglucans with a higher degree of polymerization. Shows weak activity on nigerose, but is not capable of breaking down trehalose, maltose, isomaltose, sucrose, isomaltulose, turanose or melezitose. The chain is Kojibiose hydrolase from Mucilaginibacter mallensis.